The chain runs to 112 residues: Protein Tat (112 aa).

The interval 1–24 (MDPVDPEMPPWHHPGSKPQTPCNN) is interaction with human CREBBP. A transactivation region spans residues 1–48 (MDPVDPEMPPWHHPGSKPQTPCNNCYCKRCCYHCYVCFTKKGLGISHG). Cys-22, Cys-25, and Cys-27 together coordinate Zn(2+). Residues 22 to 37 (CNNCYCKRCCYHCYVC) are cysteine-rich. Lys-28 carries the post-translational modification N6-acetyllysine; by host PCAF. The Zn(2+) site is built by Cys-30, His-33, Cys-34, and Cys-37. A core region spans residues 38 to 48 (FTKKGLGISHG). The disordered stretch occupies residues 45–112 (ISHGRKKRRR…CNSCTRISGQ (68 aa)). Residues 49-56 (RKKRRRPA) carry the Nuclear localization signal, RNA-binding (TAR), and protein transduction motif. Residues 49 to 82 (RKKRRRPAAAASYPDNKDPVPEQHTGRKQKRQEE) form an interaction with the host capping enzyme RNGTT region. An N6-acetyllysine; by host EP300 and GCN5L2 mark is found at Lys-50 and Lys-51. Asymmetric dimethylarginine; by host PRMT6 occurs at positions 52 and 53. Over residues 63 to 91 (DNKDPVPEQHTGRKQKRQEEQEKKVEKET) the composition is skewed to basic and acidic residues. The segment covering 93–112 (PSGQPCHQDSCNSCTRISGQ) has biased composition (polar residues).

Belongs to the lentiviruses Tat family. As to quaternary structure, interacts with host CCNT1. Associates with the P-TEFb complex composed at least of Tat, P-TEFb (CDK9 and CCNT1), TAR RNA, RNA Pol II. Recruits the HATs CREBBP, TAF1/TFIID, EP300, PCAF and GCN5L2. Interacts with host KAT5/Tip60; this interaction targets the latter to degradation. Interacts with the host deacetylase SIRT1. Interacts with host capping enzyme RNGTT; this interaction stimulates RNGTT. Binds to host KDR, and to the host integrins ITGAV/ITGB3 and ITGA5/ITGB1. Interacts with host KPNB1/importin beta-1 without previous binding to KPNA1/importin alpha-1. Interacts with EIF2AK2. Interacts with host nucleosome assembly protein NAP1L1; this interaction may be required for the transport of Tat within the nucleus, since the two proteins interact at the nuclear rim. Interacts with host C1QBP/SF2P32; this interaction involves lysine-acetylated Tat. Interacts with the host chemokine receptors CCR2, CCR3 and CXCR4. Interacts with host DPP4/CD26; this interaction may trigger an anti-proliferative effect. Interacts with host LDLR. Interacts with the host extracellular matrix metalloproteinase MMP1. Interacts with host PRMT6; this interaction mediates Tat's methylation. Interacts with, and is ubiquitinated by MDM2/Hdm2. Interacts with host PSMC3 and HTATIP2. Interacts with STAB1; this interaction may overcome SATB1-mediated repression of IL2 and IL2RA (interleukin) in T cells by binding to the same domain than HDAC1. Interacts (when acetylated) with human CDK13, thereby increasing HIV-1 mRNA splicing and promoting the production of the doubly spliced HIV-1 protein Nef. Interacts with host TBP; this interaction modulates the activity of transcriptional pre-initiation complex. Interacts with host RELA. Interacts with host PLSCR1; this interaction negatively regulates Tat transactivation activity by altering its subcellular distribution. Asymmetrical arginine methylation by host PRMT6 seems to diminish the transactivation capacity of Tat and affects the interaction with host CCNT1. Post-translationally, acetylation by EP300, CREBBP, GCN5L2/GCN5 and PCAF regulates the transactivation activity of Tat. EP300-mediated acetylation of Lys-50 promotes dissociation of Tat from the TAR RNA through the competitive binding to PCAF's bromodomain. In addition, the non-acetylated Tat's N-terminus can also interact with PCAF. PCAF-mediated acetylation of Lys-28 enhances Tat's binding to CCNT1. Lys-50 is deacetylated by SIRT1. In terms of processing, polyubiquitination by host MDM2 does not target Tat to degradation, but activates its transactivation function and fosters interaction with CCNT1 and TAR RNA. Phosphorylated by EIF2AK2 on serine and threonine residues adjacent to the basic region important for TAR RNA binding and function. Phosphorylation of Tat by EIF2AK2 is dependent on the prior activation of EIF2AK2 by dsRNA.

It is found in the host nucleus. It localises to the host nucleolus. The protein localises to the host cytoplasm. Its subcellular location is the secreted. Functionally, transcriptional activator that increases RNA Pol II processivity, thereby increasing the level of full-length viral transcripts. Recognizes a hairpin structure at the 5'-LTR of the nascent viral mRNAs referred to as the transactivation responsive RNA element (TAR) and recruits the cyclin T1-CDK9 complex (P-TEFb complex) that will in turn hyperphosphorylate the RNA polymerase II to allow efficient elongation. The CDK9 component of P-TEFb and other Tat-activated kinases hyperphosphorylate the C-terminus of RNA Pol II that becomes stabilized and much more processive. Other factors such as HTATSF1/Tat-SF1, SUPT5H/SPT5, and HTATIP2 are also important for Tat's function. Besides its effect on RNA Pol II processivity, Tat induces chromatin remodeling of proviral genes by recruiting the histone acetyltransferases (HATs) CREBBP, EP300 and PCAF to the chromatin. This also contributes to the increase in proviral transcription rate, especially when the provirus integrates in transcriptionally silent region of the host genome. To ensure maximal activation of the LTR, Tat mediates nuclear translocation of NF-kappa-B by interacting with host RELA. Through its interaction with host TBP, Tat may also modulate transcription initiation. Tat can reactivate a latently infected cell by penetrating in it and transactivating its LTR promoter. In the cytoplasm, Tat is thought to act as a translational activator of HIV-1 mRNAs. Extracellular circulating Tat can be endocytosed by surrounding uninfected cells via the binding to several surface receptors such as CD26, CXCR4, heparan sulfate proteoglycans (HSPG) or LDLR. Neurons are rarely infected, but they internalize Tat via their LDLR. Through its interaction with nuclear HATs, Tat is potentially able to control the acetylation-dependent cellular gene expression. Modulates the expression of many cellular genes involved in cell survival, proliferation or in coding for cytokines or cytokine receptors. Tat plays a role in T-cell and neurons apoptosis. Tat induced neurotoxicity and apoptosis probably contribute to neuroAIDS. Circulating Tat also acts as a chemokine-like and/or growth factor-like molecule that binds to specific receptors on the surface of the cells, affecting many cellular pathways. In the vascular system, Tat binds to ITGAV/ITGB3 and ITGA5/ITGB1 integrins dimers at the surface of endothelial cells and competes with bFGF for heparin-binding sites, leading to an excess of soluble bFGF. The protein is Protein Tat of Homo sapiens (Human).